We begin with the raw amino-acid sequence, 276 residues long: Potassium/proton antiporter CemA (276 aa).

3 helical membrane passes run 59–79, 199–219, and 236–256; these read LLLLILIPVLVNQMSKSWIFG, FFIILFTDMFIGFHSPHGWEV, and FIFLFIATFPVALDTVFKYWI.

Belongs to the CemA family.

The protein localises to the plastid. It is found in the chloroplast inner membrane. It catalyses the reaction K(+)(in) + H(+)(out) = K(+)(out) + H(+)(in). Contributes to K(+)/H(+) antiport activity by supporting proton efflux to control proton extrusion and homeostasis in chloroplasts in a light-dependent manner to modulate photosynthesis. Prevents excessive induction of non-photochemical quenching (NPQ) under continuous-light conditions. Indirectly promotes efficient inorganic carbon uptake into chloroplasts. In Cyanidioschyzon merolae (strain NIES-3377 / 10D) (Unicellular red alga), this protein is Potassium/proton antiporter CemA.